The chain runs to 358 residues: Homoserine O-acetyltransferase (358 aa).

An AB hydrolase-1 domain is found at 52–337; sequence NVILICHALT…DEPYGHDAFL (286 aa). Residue Ser-148 is the Nucleophile of the active site. Arg-217 lines the substrate pocket. Residues Asp-304 and His-333 contribute to the active site. Asp-334 is a binding site for substrate.

Belongs to the AB hydrolase superfamily. MetX family. Homodimer.

The protein resides in the cytoplasm. The enzyme catalyses L-homoserine + acetyl-CoA = O-acetyl-L-homoserine + CoA. Its pathway is amino-acid biosynthesis; L-methionine biosynthesis via de novo pathway; O-acetyl-L-homoserine from L-homoserine: step 1/1. Transfers an acetyl group from acetyl-CoA to L-homoserine, forming acetyl-L-homoserine. The protein is Homoserine O-acetyltransferase of Chlorobium luteolum (strain DSM 273 / BCRC 81028 / 2530) (Pelodictyon luteolum).